The sequence spans 129 residues: uncharacterized protein (129 aa).

3 helical membrane passes run 49-69 (LWSL…IVGV), 72-92 (FTIF…NLIF), and 101-118 (YFNC…NLLQ).

It localises to the membrane. This is an uncharacterized protein from Saccharomyces cerevisiae (strain ATCC 204508 / S288c) (Baker's yeast).